We begin with the raw amino-acid sequence, 229 residues long: MAASNFFLLTAFIALVATQAMASDPSPLQDFCVADKHSPVRVNGLPCKDAKDVSVDDFFLAANLDKPMDTTKSKAGSNVTLINVMKLAGLNTLSISMARIDYAPKGQNPPHTHPRATEILTVLEGSLYVGFVTSNQANRENKLFTKTLNKGDVFVFPQGLIHFQFNPSYDKPAVAIAALSSQNPGAITIANAVFGSHPPISDDVLAKAFQVDKKAMDWLQAQFWENNHN.

An N-terminal signal peptide occupies residues 1 to 22 (MAASNFFLLTAFIALVATQAMA). Cys32 and Cys47 are oxidised to a cystine. The Cupin type-1 domain occupies 62 to 217 (ANLDKPMDTT…AFQVDKKAMD (156 aa)). Residue Asn78 is glycosylated (N-linked (GlcNAc...) asparagine). The Mn(2+) site is built by His111, His113, Glu118, and His162.

It belongs to the germin family. Oligomer (believed to be a pentamer but probably hexamer).

It is found in the secreted. Its subcellular location is the extracellular space. The protein resides in the apoplast. May play a role in plant defense. Probably has no oxalate oxidase activity even if the active site is conserved. The protein is Putative germin-like protein 12-4 of Oryza sativa subsp. japonica (Rice).